A 512-amino-acid polypeptide reads, in one-letter code: Mucin-13 (512 aa).

An N-terminal signal peptide occupies residues 1–18; sequence MKAIIHLTLLALLSVNTA. The Extracellular segment spans residues 19 to 421; it reads TNQGNSADAV…GLDCKDKFQL (403 aa). The span at 22–38 shows a compositional bias: polar residues; sequence GNSADAVTTTETATSGP. 2 disordered regions span residues 22–67 and 133–176; these read GNSA…PTAT and MVPS…PSNP. The segment covering 53-67 has biased composition (low complexity); the sequence is TASTTANTPSFPTAT. Positions 135 to 176 are enriched in polar residues; the sequence is PSETQSNNEMSPTTEDNQSSGPPTGTALLETSTLNSTGPSNP. N-linked (GlcNAc...) asparagine glycans are attached at residues N151 and N169. The region spanning 173 to 211 is the EGF-like 1 domain; it reads PSNPCQDDPCADNSLCVKLHNTSFCLCLEGYYYNSSTCK. Intrachain disulfides connect C177–C188, C182–C197, and C199–C210. Residues N193, N206, N284, and N332 are each glycosylated (N-linked (GlcNAc...) asparagine). The SEA domain occupies 212–336; that stretch reads KGKVFPGKIS…DYYGCNQTAD (125 aa). 2 EGF-like domains span residues 322–361 and 363–404; these read LTLR…PFCV and SSLK…GNCQ. 6 disulfides stabilise this stretch: C326–C338, C331–C344, C346–C360, C367–C378, C371–C389, and C391–C403. Residues 422–442 form a helical membrane-spanning segment; that stretch reads ILTIVGTIAGIVILSMIIALI. The Cytoplasmic portion of the chain corresponds to 443-512; that stretch reads VTARSNNKTK…RHSSMPRPDY (70 aa). Positions 493–505 are enriched in polar residues; sequence RDSQMQNPYSRHS. Residues 493-512 are disordered; it reads RDSQMQNPYSRHSSMPRPDY.

As to quaternary structure, homodimer of beta subunits. In terms of processing, cleaved into two subunits, alpha and beta, probably between the first EGF domain and the SEA domain. Beta subunit contains the cytoplasmic tail and alpha subunit the extracellular tail. The homooligomerization into dimers is dependent on intrachain disulfide bonds. Post-translationally, highly N-glycosylated. In terms of tissue distribution, highly expressed in epithelial tissues, particularly those of the gastrointestinal and respiratory tracts, such as large intestine and trachea, followed by kidney, small intestine, appendix and stomach.

The protein localises to the cell membrane. The protein resides in the apical cell membrane. It is found in the secreted. Its function is as follows. Epithelial and hemopoietic transmembrane mucin that may play a role in cell signaling. The sequence is that of Mucin-13 (MUC13) from Homo sapiens (Human).